Consider the following 549-residue polypeptide: Antagonist of mitotic exit network protein 1 (549 aa).

Residues 1–11 (MKLERVSSNGS) are compositionally biased toward polar residues. Positions 1–39 (MKLERVSSNGSFKRGRDIQSLESPCTRPLKKMSPSPSFT) are disordered.

Belongs to the AMN1 family. In terms of assembly, interacts with TEM1.

Its subcellular location is the cytoplasm. It is found in the nucleus. Its function is as follows. Negative regulator of the mitotic exit network (MEN), required for multiple cell cycle checkpoints. Acts in the daughter cell to inhibit the mitotic exit pathway once MEN has executed its function. Through its binding ability to TEM1, interferes with the TEM1-CDC5 association, required for CDC5 kinase activation and MEN activation. Required for daughter cell separation and chromosome stability. Involved in copper sensitivity. The sequence is that of Antagonist of mitotic exit network protein 1 (AMN1) from Saccharomyces cerevisiae (strain ATCC 204508 / S288c) (Baker's yeast).